A 1923-amino-acid chain; its full sequence is Callose synthase 5 (1923 aa).

A compositionally biased stretch (polar residues) spans 1–10; sequence MAQSSTSHDS. Residues 1 to 22 are disordered; the sequence is MAQSSTSHDSGPQGLMRRPSRS. Residues 1-481 are Cytoplasmic-facing; the sequence is MAQSSTSHDS…ETRTFWHIYH (481 aa). The helical transmembrane segment at 482 to 502 threads the bilayer; it reads SFDRLWTFYLLALQAMIILAF. Residues 503–521 lie on the Extracellular side of the membrane; it reads ERVELREILRKDVLYALSS. Residues 522–542 form a helical membrane-spanning segment; it reads IFITAAFLRFLQSVLDVILNF. Residues 543–559 are Cytoplasmic-facing; sequence PGFHRWKFTDVLRNILK. A helical transmembrane segment spans residues 560-580; the sequence is IVVSLAWCVVLPLCYAQSVSF. Over 581–601 the chain is Extracellular; that stretch reads APGKLKQWLSFLPQVKGVPPL. The helical transmembrane segment at 602-622 threads the bilayer; the sequence is YIMAVALYLLPNVLAAIMFIF. Residues 623-658 are Cytoplasmic-facing; the sequence is PMLRRWIENSDWHIFRLLLWWSQPRIYVGRGMHESQ. A helical membrane pass occupies residues 659–679; sequence IALIKYTIFWLLLFCCKFAFS. Residues 680-719 lie on the Extracellular side of the membrane; it reads YFLQVKLLVKPTNAIMSIRHVKYKWHEFFPNAEHNYGAVV. Residues 720–740 traverse the membrane as a helical segment; sequence SLWLPVILVYFMDTQIWYAIF. The Cytoplasmic portion of the chain corresponds to 741 to 1486; the sequence is STICGGVIGA…FDFFRMMSCY (746 aa). A helical membrane pass occupies residues 1487 to 1507; it reads FTTVGFYISSMIVVLTVYAFL. At 1508–1535 the chain is on the extracellular side; the sequence is YGRLYLSLSGVEEAIVKFAAAKGDSSLK. The chain crosses the membrane as a helical span at residues 1536–1556; sequence AAMASQSVVQLGLLMTLPMVM. Topologically, residues 1557-1566 are cytoplasmic; it reads EIGLERGFRT. Residues 1567–1587 traverse the membrane as a helical segment; the sequence is ALSDLIIMQLQLAPVFFTFSL. Residues 1588–1630 are Extracellular-facing; the sequence is GTKVHYYGRTILHGGSKYRATGRGFVVKHEKFAENYRMYSRSH. A helical transmembrane segment spans residues 1631 to 1651; that stretch reads FVKGMELMVLLICYRIYGKAA. Topologically, residues 1652–1657 are cytoplasmic; sequence EDSVGY. The helical transmembrane segment at 1658–1678 threads the bilayer; sequence ALVMGSTWFLVGSWLFAPFFF. Over 1679-1732 the chain is Extracellular; it reads NPSGFEWQKIVDDWDDWNKWISSRGGIGVPANKSWESWWEEEQEHLLHSGFFGK. Asn-1710 carries N-linked (GlcNAc...) asparagine glycosylation. Residues 1733–1755 form a helical membrane-spanning segment; that stretch reads FWEIFLSLRYFIYQYGIVYQLNL. Residues 1756 to 1766 lie on the Cytoplasmic side of the membrane; sequence TKESRMGKQHS. Residues 1767–1787 traverse the membrane as a helical segment; the sequence is IIVYGLSWLVIVAVMIVLKIV. The Extracellular portion of the chain corresponds to 1788-1803; the sequence is SMGRKKFSADFQLMFR. Residues 1804 to 1824 traverse the membrane as a helical segment; the sequence is LLKLFLFIGSVVIVGMLFHFL. A topological domain (cytoplasmic) is located at residue Lys-1825. Residues 1826–1846 form a helical membrane-spanning segment; the sequence is LTVGDIMQSLLAFLPTGWALL. Residues 1847–1873 are Extracellular-facing; sequence QISQVARPLMKTVGMWGSVKALARGYE. Residues 1874–1894 traverse the membrane as a helical segment; it reads YIMGVVIFMPVTVLAWFPFVS. The Cytoplasmic segment spans residues 1895 to 1923; the sequence is EFQTRLLFNQAFSRGLQIQRILAGGKKQK.

This sequence belongs to the glycosyltransferase 48 family.

The protein resides in the cell membrane. It carries out the reaction [(1-&gt;3)-beta-D-glucosyl](n) + UDP-alpha-D-glucose = [(1-&gt;3)-beta-D-glucosyl](n+1) + UDP + H(+). In terms of biological role, required for the formation of the callose wall separating the tetraspores (interstitial wall) and surrounding the pollen mother cells (peripheral wall). Required for exine formation on pollen wall. May be involved in callose synthesis during pollen tube growth. During plant growth and development, callose is found as a transitory component of the cell plate in dividing cells, is a major component of pollen mother cell walls and pollen tubes, and is found as a structural component of plasmodesmatal canals. The sequence is that of Callose synthase 5 (CALS5) from Arabidopsis thaliana (Mouse-ear cress).